The sequence spans 329 residues: Glycerol-3-phosphate dehydrogenase [NAD(P)+] (329 aa).

NADPH-binding residues include tyrosine 14, arginine 34, and lysine 108. Sn-glycerol 3-phosphate is bound by residues lysine 108, glycine 137, and serine 139. Alanine 141 contacts NADPH. Lysine 192, aspartate 245, serine 255, arginine 256, and asparagine 257 together coordinate sn-glycerol 3-phosphate. The Proton acceptor role is filled by lysine 192. An NADPH-binding site is contributed by arginine 256. NADPH is bound by residues isoleucine 280 and glutamate 282.

This sequence belongs to the NAD-dependent glycerol-3-phosphate dehydrogenase family.

The protein localises to the cytoplasm. The enzyme catalyses sn-glycerol 3-phosphate + NAD(+) = dihydroxyacetone phosphate + NADH + H(+). It catalyses the reaction sn-glycerol 3-phosphate + NADP(+) = dihydroxyacetone phosphate + NADPH + H(+). It participates in membrane lipid metabolism; glycerophospholipid metabolism. Functionally, catalyzes the reduction of the glycolytic intermediate dihydroxyacetone phosphate (DHAP) to sn-glycerol 3-phosphate (G3P), the key precursor for phospholipid synthesis. The sequence is that of Glycerol-3-phosphate dehydrogenase [NAD(P)+] from Wigglesworthia glossinidia brevipalpis.